Here is a 463-residue protein sequence, read N- to C-terminus: Nuclear hormone receptor family member nhr-79 (463 aa).

The nuclear receptor DNA-binding region spans 3–81 (RGKCMVCDSP…AGMMRDLVQA (79 aa)). 2 consecutive NR C4-type zinc fingers follow at residues 6-27 (CMVCDSPNATNYHFGAQSCKAC) and 43-64 (CLGDGVHSCKIDHTLRLNCRHC). The interval 83–119 (REIKSDKGKNSRNSSQSEDFFSPPPEQPGPSNYFDQF) is disordered. In terms of domain architecture, NR LBD spans 203–463 (YTEQVINLNM…ILKDMLKFQY (261 aa)).

It belongs to the nuclear hormone receptor family.

Its subcellular location is the nucleus. Functionally, orphan nuclear receptor. The chain is Nuclear hormone receptor family member nhr-79 (nhr-79) from Caenorhabditis elegans.